We begin with the raw amino-acid sequence, 106 residues long: Integration host factor subunit alpha (106 aa).

This sequence belongs to the bacterial histone-like protein family. In terms of assembly, heterodimer of an alpha and a beta chain.

This protein is one of the two subunits of integration host factor, a specific DNA-binding protein that functions in genetic recombination as well as in transcriptional and translational control. This chain is Integration host factor subunit alpha, found in Nitrobacter winogradskyi (strain ATCC 25391 / DSM 10237 / CIP 104748 / NCIMB 11846 / Nb-255).